The sequence spans 302 residues: Beta-1,2-mannobiose phosphorylase (302 aa).

Belongs to the glycosyl hydrolase 130 family. In terms of assembly, monomer.

The catalysed reaction is beta-D-mannopyranosyl-(1-&gt;2)-D-mannopyranose + phosphate = alpha-D-mannose 1-phosphate + D-mannose. It functions in the pathway nucleotide-sugar biosynthesis; GDP-alpha-D-mannose biosynthesis. In terms of biological role, probably involved in a salvage pathway for GDP-D-mannose biosynthesis. Catalyzes the reversible phosphorolysis of 1,2-beta-oligomannan. In phosphorolytic reactions, prefers beta-1,2-mannobiose (beta-1,2-Man2) as substrate. Produces alpha-D-mannose 1-phosphate, which is the precursor of GDP-D-mannose. This is Beta-1,2-mannobiose phosphorylase from Thermoanaerobacter sp. (strain X514).